The following is a 217-amino-acid chain: N-(5'-phosphoribosyl)anthranilate isomerase (217 aa).

The protein belongs to the TrpF family.

The enzyme catalyses N-(5-phospho-beta-D-ribosyl)anthranilate = 1-(2-carboxyphenylamino)-1-deoxy-D-ribulose 5-phosphate. It functions in the pathway amino-acid biosynthesis; L-tryptophan biosynthesis; L-tryptophan from chorismate: step 3/5. The protein is N-(5'-phosphoribosyl)anthranilate isomerase of Acaryochloris marina (strain MBIC 11017).